Consider the following 165-residue polypeptide: MNIEKSNGKSLMTKINNLAKELGIENPQGVTIVRLEDTEDPNKKTLELVQGSWESKAPWFVIDKEEKVHVLSTLESILHLIRSLNEAKYENFNLKLEKAILENLPIDFNDVWVVAMSEIQKRLTESKNKNLLDIDIKKLVKDIKKHHPNLFMQLKDLQFPPQGHQ.

The protein belongs to the UPF0763 family.

The polypeptide is UPF0763 protein NIS_0363 (Nitratiruptor sp. (strain SB155-2)).